A 203-amino-acid polypeptide reads, in one-letter code: LexA repressor (203 aa).

The segment at residues 30 to 50 (VREICQAVSLKSTSTVHGHLK) is a DNA-binding region (H-T-H motif). Active-site for autocatalytic cleavage activity residues include serine 127 and lysine 164.

This sequence belongs to the peptidase S24 family. As to quaternary structure, homodimer.

It catalyses the reaction Hydrolysis of Ala-|-Gly bond in repressor LexA.. Functionally, represses a number of genes involved in the response to DNA damage (SOS response), including recA and lexA. In the presence of single-stranded DNA, RecA interacts with LexA causing an autocatalytic cleavage which disrupts the DNA-binding part of LexA, leading to derepression of the SOS regulon and eventually DNA repair. The sequence is that of LexA repressor from Clostridium perfringens (strain ATCC 13124 / DSM 756 / JCM 1290 / NCIMB 6125 / NCTC 8237 / Type A).